Here is a 218-residue protein sequence, read N- to C-terminus: Deoxyribose-phosphate aldolase (218 aa).

The active-site Proton donor/acceptor is the D92. Residue K156 is the Schiff-base intermediate with acetaldehyde of the active site. K185 (proton donor/acceptor) is an active-site residue.

This sequence belongs to the DeoC/FbaB aldolase family. DeoC type 1 subfamily.

The protein localises to the cytoplasm. It carries out the reaction 2-deoxy-D-ribose 5-phosphate = D-glyceraldehyde 3-phosphate + acetaldehyde. Its pathway is carbohydrate degradation; 2-deoxy-D-ribose 1-phosphate degradation; D-glyceraldehyde 3-phosphate and acetaldehyde from 2-deoxy-alpha-D-ribose 1-phosphate: step 2/2. Catalyzes a reversible aldol reaction between acetaldehyde and D-glyceraldehyde 3-phosphate to generate 2-deoxy-D-ribose 5-phosphate. The chain is Deoxyribose-phosphate aldolase from Desulfitobacterium hafniense (strain Y51).